Reading from the N-terminus, the 438-residue chain is Exosome complex component RRP45B (438 aa).

Disordered stretches follow at residues 293–322 (PTLA…RAAE) and 334–438 (STEE…KNKS). Basic and acidic residues-rich tracts occupy residues 307–322 (VKEE…RAAE) and 334–347 (STEE…EEAA). The segment covering 380–394 (TKSSSTKKMNGSGNA) has biased composition (polar residues). Residues 410-429 (LGKKDTKHKDGEMTLKDAVK) show a composition bias toward basic and acidic residues.

This sequence belongs to the RNase PH family.

Its subcellular location is the cytoplasm. It is found in the nucleus. Probable 3'-&gt;5' exoribonuclease involved in the regulation of cuticular wax biosynthesis by controlling the expression of CER3. May act by degrading a specific mRNA species encoding a negative regulator of CER3 transcription. Can perform exosomal functions and complement the yeast rrp45 null mutant. In Arabidopsis thaliana (Mouse-ear cress), this protein is Exosome complex component RRP45B.